A 151-amino-acid chain; its full sequence is Large ribosomal subunit protein uL13 (151 aa).

A disordered region spans residues 126-151 (YPGPNHPHQAQKPEELTLNTIPNGDK). Polar residues predominate over residues 142-151 (TLNTIPNGDK).

This sequence belongs to the universal ribosomal protein uL13 family. As to quaternary structure, part of the 50S ribosomal subunit.

In terms of biological role, this protein is one of the early assembly proteins of the 50S ribosomal subunit, although it is not seen to bind rRNA by itself. It is important during the early stages of 50S assembly. This chain is Large ribosomal subunit protein uL13, found in Crocosphaera subtropica (strain ATCC 51142 / BH68) (Cyanothece sp. (strain ATCC 51142)).